We begin with the raw amino-acid sequence, 487 residues long: Acetyl-coenzyme A carboxylase carboxyl transferase subunit beta, chloroplastic (487 aa).

The segment at 180–201 (SRNSSENEGSSKRTRTKGSDLT) is disordered. In terms of domain architecture, CoA carboxyltransferase N-terminal spans 218–487 (LWVQCENCYG…PLNQKSSKIK (270 aa)). The Zn(2+) site is built by C222, C225, C241, and C244. The segment at 222–244 (CENCYGLNYKKFLKSKMNICEQC) adopts a C4-type zinc-finger fold.

It belongs to the AccD/PCCB family. Acetyl-CoA carboxylase is a heterohexamer composed of biotin carboxyl carrier protein, biotin carboxylase and 2 subunits each of ACCase subunit alpha and ACCase plastid-coded subunit beta (accD). Requires Zn(2+) as cofactor.

The protein localises to the plastid. Its subcellular location is the chloroplast stroma. The catalysed reaction is N(6)-carboxybiotinyl-L-lysyl-[protein] + acetyl-CoA = N(6)-biotinyl-L-lysyl-[protein] + malonyl-CoA. The protein operates within lipid metabolism; malonyl-CoA biosynthesis; malonyl-CoA from acetyl-CoA: step 1/1. Component of the acetyl coenzyme A carboxylase (ACC) complex. Biotin carboxylase (BC) catalyzes the carboxylation of biotin on its carrier protein (BCCP) and then the CO(2) group is transferred by the transcarboxylase to acetyl-CoA to form malonyl-CoA. The sequence is that of Acetyl-coenzyme A carboxylase carboxyl transferase subunit beta, chloroplastic from Atropa belladonna (Belladonna).